The sequence spans 36 residues: Protein YibY (36 aa).

The chain is Protein YibY from Escherichia coli (strain K12).